Reading from the N-terminus, the 272-residue chain is Bis(5'-nucleosyl)-tetraphosphatase, symmetrical (272 aa).

This sequence belongs to the Ap4A hydrolase family.

The catalysed reaction is P(1),P(4)-bis(5'-adenosyl) tetraphosphate + H2O = 2 ADP + 2 H(+). Hydrolyzes diadenosine 5',5'''-P1,P4-tetraphosphate to yield ADP. In Glaesserella parasuis serovar 5 (strain SH0165) (Haemophilus parasuis), this protein is Bis(5'-nucleosyl)-tetraphosphatase, symmetrical.